Here is a 307-residue protein sequence, read N- to C-terminus: Elongation factor Ts (307 aa).

An involved in Mg(2+) ion dislocation from EF-Tu region spans residues 80 to 83 (TDFV).

It belongs to the EF-Ts family.

It localises to the cytoplasm. Its function is as follows. Associates with the EF-Tu.GDP complex and induces the exchange of GDP to GTP. It remains bound to the aminoacyl-tRNA.EF-Tu.GTP complex up to the GTP hydrolysis stage on the ribosome. This chain is Elongation factor Ts, found in Rhizorhabdus wittichii (strain DSM 6014 / CCUG 31198 / JCM 15750 / NBRC 105917 / EY 4224 / RW1) (Sphingomonas wittichii).